Consider the following 178-residue polypeptide: Single-stranded DNA-binding protein 2 (178 aa).

The SSB domain occupies 6 to 111; sequence VNKVILVGNL…VVVSQSGTMQ (106 aa). Residues 55 to 61 mediate DNA binding; that stretch reads WHRVVLY. The interval 111–161 is disordered; that stretch reads QMLGGRNSAGSGQQQGGWGQPQQPAAPSHSGMPPQQHPANEPPMDFDDDIP.

As to quaternary structure, homotetramer.

This chain is Single-stranded DNA-binding protein 2 (ssb2), found in Salmonella typhi.